We begin with the raw amino-acid sequence, 231 residues long: 7-cyano-7-deazaguanine synthase (231 aa).

8-18 is an ATP binding site; the sequence is FSGGQDSTTCL. Positions 188, 197, 200, and 203 each coordinate Zn(2+).

This sequence belongs to the QueC family. The cofactor is Zn(2+).

The catalysed reaction is 7-carboxy-7-deazaguanine + NH4(+) + ATP = 7-cyano-7-deazaguanine + ADP + phosphate + H2O + H(+). It functions in the pathway purine metabolism; 7-cyano-7-deazaguanine biosynthesis. In terms of biological role, catalyzes the ATP-dependent conversion of 7-carboxy-7-deazaguanine (CDG) to 7-cyano-7-deazaguanine (preQ(0)). This is 7-cyano-7-deazaguanine synthase from Shigella flexneri serotype 5b (strain 8401).